Consider the following 658-residue polypeptide: Phosphomethylpyrimidine synthase (658 aa).

A disordered region spans residues 1 to 22; sequence MNNSTDAVNPAKKPQTRREKRE. Residues Asn248, Met277, Tyr306, His342, 362 to 364, 403 to 406, and Glu442 contribute to the substrate site; these read SRG and DGLR. His446 contacts Zn(2+). Tyr469 is a binding site for substrate. His510 is a binding site for Zn(2+). Cys590, Cys593, and Cys598 together coordinate [4Fe-4S] cluster.

This sequence belongs to the ThiC family. As to quaternary structure, homodimer. The cofactor is [4Fe-4S] cluster.

It carries out the reaction 5-amino-1-(5-phospho-beta-D-ribosyl)imidazole + S-adenosyl-L-methionine = 4-amino-2-methyl-5-(phosphooxymethyl)pyrimidine + CO + 5'-deoxyadenosine + formate + L-methionine + 3 H(+). Its pathway is cofactor biosynthesis; thiamine diphosphate biosynthesis. Catalyzes the synthesis of the hydroxymethylpyrimidine phosphate (HMP-P) moiety of thiamine from aminoimidazole ribotide (AIR) in a radical S-adenosyl-L-methionine (SAM)-dependent reaction. This Colwellia psychrerythraea (strain 34H / ATCC BAA-681) (Vibrio psychroerythus) protein is Phosphomethylpyrimidine synthase.